Here is a 1011-residue protein sequence, read N- to C-terminus: Protein argonaute 1C (1011 aa).

A compositionally biased stretch (basic residues) spans 1 to 11 (MASRRPTHRHH). Disordered stretches follow at residues 1–95 (MASR…SPLA) and 107–147 (RPSE…PLRP). Low complexity-rich tracts occupy residues 28 to 53 (ARYAQPQPQPQQQQQQQGRGCRARGA) and 61 to 92 (QQQQQQPRSTPTRATTVTVASSSSTTATASSS). Residues 127–140 (ATTTPHHIPSSSKS) are compositionally biased toward polar residues. Residues 352-462 (PVIDFVAQLL…LPMEVCKIVE (111 aa)) form the PAZ domain. Residues 638-959 (LLIGILPDNN…AAFRARFYME (322 aa)) enclose the Piwi domain. Residues 963-982 (SDSSSVVSGPGVRGPLSGSS) are compositionally biased toward low complexity. Positions 963 to 994 (SDSSSVVSGPGVRGPLSGSSTSRTRAPGGAAV) are disordered.

This sequence belongs to the argonaute family. Ago subfamily.

Probably involved in the RNA silencing pathway. May bind to short RNAs such as microRNAs (miRNAs) or short interfering RNAs (siRNAs), and represses the translation of mRNAs which are complementary to them. In Oryza sativa subsp. japonica (Rice), this protein is Protein argonaute 1C (AGO1C).